The primary structure comprises 455 residues: MLDIKLIRENPEIVKRDLIKRGETEKLKWIDEILELDKKWRENLKKINQLRKERNQLAVQIGKRKKAGEPIDDLLKRSNEIVKQIEELEKENEELKKKIDYYLWRLPNITHESVPVGESDEDNVPIRFWGKAKVWEGFLETFKEQSLGKMEYEVLSWRPRLHVDMLELLRGADLERAAKVSGARFYYLLNELVILDLALIRFALDKLIEKGFTPVIPPYMVRRFVEEGATTFDDFEDVIYKVEGEDLYLIPTAEHPLAGMHANEILDGKDLPLLYVGVSPCFRKEAGTAGKDTKGIFRVHQFHKVEQFVYSRPEESWEWHERIIANAEEIFQALEIPYRVVNICTGDLGYVAAKKYDIEAWMAGQGKFREVVSASNCTDWQARRLNIRFRDKTHEKPRFVHTLNSTAIATSRAIVAILENHQTEEGVVKLPKALWKYTGFKEILPAHMKEKCCQD.

252-254 (TAE) serves as a coordination point for L-serine. ATP is bound by residues 283-285 (RKE) and valine 299. Residue glutamate 306 coordinates L-serine. 370 to 373 (EVVS) is a binding site for ATP. Threonine 406 contributes to the L-serine binding site.

Belongs to the class-II aminoacyl-tRNA synthetase family. Type-1 seryl-tRNA synthetase subfamily. In terms of assembly, homodimer. The tRNA molecule binds across the dimer.

The protein localises to the cytoplasm. The enzyme catalyses tRNA(Ser) + L-serine + ATP = L-seryl-tRNA(Ser) + AMP + diphosphate + H(+). The catalysed reaction is tRNA(Sec) + L-serine + ATP = L-seryl-tRNA(Sec) + AMP + diphosphate + H(+). The protein operates within aminoacyl-tRNA biosynthesis; selenocysteinyl-tRNA(Sec) biosynthesis; L-seryl-tRNA(Sec) from L-serine and tRNA(Sec): step 1/1. Its function is as follows. Catalyzes the attachment of serine to tRNA(Ser). Is also able to aminoacylate tRNA(Sec) with serine, to form the misacylated tRNA L-seryl-tRNA(Sec), which will be further converted into selenocysteinyl-tRNA(Sec). In Thermococcus kodakarensis (strain ATCC BAA-918 / JCM 12380 / KOD1) (Pyrococcus kodakaraensis (strain KOD1)), this protein is Serine--tRNA ligase.